Here is a 109-residue protein sequence, read N- to C-terminus: Putative pterin-4-alpha-carbinolamine dehydratase (109 aa).

The protein belongs to the pterin-4-alpha-carbinolamine dehydratase family.

The catalysed reaction is (4aS,6R)-4a-hydroxy-L-erythro-5,6,7,8-tetrahydrobiopterin = (6R)-L-erythro-6,7-dihydrobiopterin + H2O. The sequence is that of Putative pterin-4-alpha-carbinolamine dehydratase from Halorhodospira halophila (strain DSM 244 / SL1) (Ectothiorhodospira halophila (strain DSM 244 / SL1)).